The following is a 414-amino-acid chain: Tar DNA-binding protein homolog 1 (414 aa).

Composition is skewed to basic and acidic residues over residues 1–44 (MADE…KTTD) and 153–167 (DDGRDGRSGRKRAVE). 2 disordered regions span residues 1 to 58 (MADE…GDEP) and 132 to 167 (SSADATSAKRRKVGSSDDSDSDDGRDGRSGRKRAVE). RRM domains follow at residues 173-259 (VDLI…QGRP) and 262-341 (SRIF…IAQP). Residues 343–414 (EENNQSVGPD…APGDSRGPGW (72 aa)) form a disordered region. Basic and acidic residues predominate over residues 361–373 (NRRERDRPDRRPI).

In terms of assembly, interacts with chromobox protein homolog hpl-2; interaction may maintain localization of hpl-2 to gene bodies. Widely expressed in a range of tissues including body wall muscles, pharynx and neurons of the midbody in adults and larvae.

The protein resides in the nucleus. The protein localises to the cytoplasm. RNA-binding protein which regulates transcription, splicing and RNA-editing. Limits the accumulation of double-stranded RNA by maintaining the abundance of the mature RNA transcripts that are formed from double-stranded precursor RNAs. Stress response protein that acts downstream of daf-16 in the insulin/IGF pathway to regulate longevity and the cellular stress response to osmotic, oxidative, proteotoxic and endoplasmic reticulum stress. Involved in the regulation of physiological processes including aging, fertility, growth and locomotion. Plays a role in maintaining localization of chromobox protein homolog hpl-2 to gene bodies, perhaps acting via binding to nascent RNA transcripts. The chain is Tar DNA-binding protein homolog 1 from Caenorhabditis elegans.